Consider the following 138-residue polypeptide: Calmodulin-beta (138 aa).

EF-hand domains follow at residues 1-32 (EFKEAFSLFDKDGDGTITTKELGTVMRSLGQN), 33-68 (PTEAELQDMINEVDADGNGTIDFPEFLTMMARKMKE), 70-105 (DSEEEIREAFRVFDKDGNGFISAAELRHVMTNLGEK), and 106-138 (LTDEEVDEMIREADIDGDGQVNYEEFVAMMTSK). The Ca(2+) site is built by aspartate 10, aspartate 12, aspartate 14, threonine 16, glutamate 21, aspartate 46, aspartate 48, asparagine 50, threonine 52, glutamate 57, aspartate 83, aspartate 85, asparagine 87, glutamate 94, aspartate 119, aspartate 121, aspartate 123, glutamine 125, and glutamate 130.

The protein belongs to the calmodulin family.

Its function is as follows. Calmodulin mediates the control of a large number of enzymes, ion channels and other proteins by Ca(2+). Among the enzymes to be stimulated by the calmodulin-Ca(2+) complex are a number of protein kinases and phosphatases. This chain is Calmodulin-beta, found in Arbacia punctulata (Punctuate sea urchin).